Consider the following 526-residue polypeptide: PTS system alpha-glucoside-specific EIICB component (526 aa).

One can recognise a PTS EIIC type-1 domain in the interval 1–417 (MLKHFQRLGG…YNVKTSGRED (417 aa)). 12 helical membrane-spanning segments follow: residues 12 to 32 (LFAP…TIIL), 59 to 79 (GWTV…IGLA), 88 to 108 (LAVL…LTFW), 132 to 152 (IKTL…TIYI), 173 to 193 (LVSA…CLVW), 200 to 220 (ISSL…LYTF), 224 to 244 (ILIP…GPAV), 274 to 294 (GGFA…ALAM), 305 to 325 (IVSG…ITEP), 330 to 350 (FLFI…TMAA), 355 to 375 (FGVV…WLPL), and 381 to 401 (GVMF…YLVF). The PTS EIIB type-1 domain occupies 447-526 (SGKAKAFLEA…ESFENLMEQN (80 aa)). The active-site Phosphocysteine intermediate; for EIIB activity is the Cys-469.

The protein resides in the cell membrane. The phosphoenolpyruvate-dependent sugar phosphotransferase system (sugar PTS), a major carbohydrate active -transport system, catalyzes the phosphorylation of incoming sugar substrates concomitantly with their translocation across the cell membrane. This system is involved in alpha-glucoside transport. The protein is PTS system alpha-glucoside-specific EIICB component (malB) of Fusobacterium mortiferum.